The following is a 130-amino-acid chain: MKKGTVINTQLSQVIADMGHFDLLGIGDAGMPVPEDTWKIDLAVSKNLPSFIDVLKNVLSELQVQKVYLAEEIKTENPEQLKQIQQLIDVPIAFIPHDQMKQDLSKTKAFVRTGEMTPYSNILLESGVVF.

Residue histidine 20 is the Proton donor of the active site. Substrate contacts are provided by residues aspartate 28, histidine 97, and 119–121 (YSN).

It belongs to the RbsD / FucU family. RbsD subfamily. As to quaternary structure, homodecamer.

It is found in the cytoplasm. The enzyme catalyses beta-D-ribopyranose = beta-D-ribofuranose. It functions in the pathway carbohydrate metabolism; D-ribose degradation; D-ribose 5-phosphate from beta-D-ribopyranose: step 1/2. Functionally, catalyzes the interconversion of beta-pyran and beta-furan forms of D-ribose. This is D-ribose pyranase from Lacticaseibacillus casei (strain BL23) (Lactobacillus casei).